The following is a 171-amino-acid chain: 3-hydroxyanthranilate 3,4-dioxygenase (171 aa).

R44 lines the O2 pocket. Fe cation is bound by residues H48, E54, and H92. A substrate-binding site is contributed by E54. The substrate site is built by R96 and E106. A divalent metal cation contacts are provided by C121, C126, C160, and C163.

It belongs to the 3-HAO family. The cofactor is Fe(2+).

The protein resides in the cytoplasm. The enzyme catalyses 3-hydroxyanthranilate + O2 = (2Z,4Z)-2-amino-3-carboxymuconate 6-semialdehyde. The protein operates within cofactor biosynthesis; NAD(+) biosynthesis; quinolinate from L-kynurenine: step 3/3. In terms of biological role, catalyzes the oxidative ring opening of 3-hydroxyanthranilate to 2-amino-3-carboxymuconate semialdehyde, which spontaneously cyclizes to quinolinate. In Yarrowia lipolytica (strain CLIB 122 / E 150) (Yeast), this protein is 3-hydroxyanthranilate 3,4-dioxygenase.